The primary structure comprises 990 residues: A-type ATP synthase subunit B (990 aa).

The DOD-type homing endonuclease domain maps to 491 to 614 (VAGLIASDGS…LQLLLKRLGV (124 aa)).

This sequence belongs to the ATPase alpha/beta chains family. In terms of assembly, has multiple subunits with at least A(3), B(3), C, D, E, F, H, I and proteolipid K(x). Post-translationally, this protein undergoes a protein self splicing that involves a post-translational excision of the VDE intervening region (intein) followed by peptide ligation.

It localises to the cell membrane. Its function is as follows. Component of the A-type ATP synthase that produces ATP from ADP in the presence of a proton gradient across the membrane. The B chain is a regulatory subunit. The chain is A-type ATP synthase subunit B from Methanopyrus kandleri (strain AV19 / DSM 6324 / JCM 9639 / NBRC 100938).